Consider the following 445-residue polypeptide: Aminopeptidase C (445 aa).

Active-site residues include C69, H363, and N385.

It belongs to the peptidase C1 family. In terms of assembly, homohexamer.

The catalysed reaction is Inactivates bleomycin B2 (a cytotoxic glycometallopeptide) by hydrolysis of a carboxyamide bond of beta-aminoalanine, but also shows general aminopeptidase activity. The specificity varies somewhat with source, but amino acid arylamides of Met, Leu and Ala are preferred.. The protein is Aminopeptidase C (pepC) of Streptococcus thermophilus.